The following is a 332-amino-acid chain: MSVREDRNVYDVTVIGGGPTGMFAAFYGGLRQMNVKIIESLPQLGGQLAALYPEKYIYDIAGFPKVRAQELVDQLKEQLSRFSPTICLNQSVEMLEKQEDGTFKLTTDKEIHYSKTVIITAGNGAFQPRRLEIDSASQYEGKNLHYFISDLQQFAGKRVLVCGGGDSAVDWSLMLEPIAASVTIVHRRDKFRAHEHSVEQLMNSRVQVKTPYVPAELIGDEQGIRQVVLEHVKEGAKETIDVDAVIVNYGFISSLGPIKNWGLDIEKNSIKVNSRMETNIPGVYAAGDICTYDGKIKLIACGFGEAPIAISSAKTYIDPTARMQPAHSSSLF.

The FAD site is built by Thr-20, Glu-39, Gln-47, Tyr-52, Val-92, Phe-126, Asp-288, and Ser-329.

This sequence belongs to the ferredoxin--NADP reductase type 2 family. Homodimer. It depends on FAD as a cofactor.

The catalysed reaction is 2 reduced [2Fe-2S]-[ferredoxin] + NADP(+) + H(+) = 2 oxidized [2Fe-2S]-[ferredoxin] + NADPH. In Geobacillus thermodenitrificans (strain NG80-2), this protein is Ferredoxin--NADP reductase.